We begin with the raw amino-acid sequence, 450 residues long: NADH-ubiquinone oxidoreductase chain 2 (450 aa).

A run of 13 helical transmembrane segments spans residues 25 to 45 (GTIT…IVAM), 58 to 78 (LTPY…MLLM), 90 to 110 (SPFY…FPLV), 113 to 133 (LIAL…LTGL), 145 to 165 (LLYF…SYFV), 186 to 206 (AFDY…MAPL), 219 to 239 (TYIT…WIFA), 248 to 268 (VTIL…LFQV), 272 to 292 (TMLA…MMSY), 295 to 315 (AFYI…LGML), 344 to 364 (LAFS…TPGF), 385 to 405 (AIVV…KVLF), and 414 to 436 (NFIN…SFFM).

The protein belongs to the complex I subunit 2 family.

The protein localises to the mitochondrion inner membrane. It carries out the reaction a ubiquinone + NADH + 5 H(+)(in) = a ubiquinol + NAD(+) + 4 H(+)(out). Its function is as follows. Core subunit of the mitochondrial membrane respiratory chain NADH dehydrogenase (Complex I) that is believed to belong to the minimal assembly required for catalysis. Complex I functions in the transfer of electrons from NADH to the respiratory chain. The immediate electron acceptor for the enzyme is believed to be ubiquinone. This is NADH-ubiquinone oxidoreductase chain 2 (ND2) from Debaryomyces hansenii (strain ATCC 36239 / CBS 767 / BCRC 21394 / JCM 1990 / NBRC 0083 / IGC 2968) (Yeast).